We begin with the raw amino-acid sequence, 387 residues long: Phosphoglycerate kinase (387 aa).

Substrate-binding positions include 21–23 (DLN), Arg36, 59–62 (HLGR), Arg113, and Arg146. Residues Lys197, Glu314, and 340-343 (GGDT) each bind ATP.

This sequence belongs to the phosphoglycerate kinase family. As to quaternary structure, monomer.

It localises to the cytoplasm. The enzyme catalyses (2R)-3-phosphoglycerate + ATP = (2R)-3-phospho-glyceroyl phosphate + ADP. The protein operates within carbohydrate degradation; glycolysis; pyruvate from D-glyceraldehyde 3-phosphate: step 2/5. The chain is Phosphoglycerate kinase from Pseudomonas syringae pv. tomato (strain ATCC BAA-871 / DC3000).